The following is a 260-amino-acid chain: Membrane protein insertase YidC 1 (260 aa).

The signal sequence occupies residues M1–G22. C23 is lipidated: N-palmitoyl cysteine. C23 carries the S-diacylglycerol cysteine lipid modification. 5 helical membrane-spanning segments follow: residues I29–I49, V52–I72, L133–I153, F164–L184, and M213–I233.

The protein belongs to the OXA1/ALB3/YidC family. Type 2 subfamily.

Its subcellular location is the cell membrane. Functionally, required for the insertion and/or proper folding and/or complex formation of integral membrane proteins into the membrane. Involved in integration of membrane proteins that insert both dependently and independently of the Sec translocase complex, as well as at least some lipoproteins. The chain is Membrane protein insertase YidC 1 from Bacillus cereus (strain ATCC 14579 / DSM 31 / CCUG 7414 / JCM 2152 / NBRC 15305 / NCIMB 9373 / NCTC 2599 / NRRL B-3711).